The chain runs to 250 residues: Phosphatidylglycerol--prolipoprotein diacylglyceryl transferase (250 aa).

A run of 4 helical transmembrane segments spans residues 11–31 (LAIR…LLLA), 49–69 (FLIA…IFEF), 84–104 (QGGL…YIYL), and 109–129 (ESFF…QAIG). Arginine 130 contributes to the a 1,2-diacyl-sn-glycero-3-phospho-(1'-sn-glycerol) binding site. The next 3 helical transmembrane spans lie at 169–189 (PTFL…VYLL), 196–216 (GIVF…IEGL), and 228–248 (VAQL…YNII).

This sequence belongs to the Lgt family.

It is found in the cell membrane. It carries out the reaction L-cysteinyl-[prolipoprotein] + a 1,2-diacyl-sn-glycero-3-phospho-(1'-sn-glycerol) = an S-1,2-diacyl-sn-glyceryl-L-cysteinyl-[prolipoprotein] + sn-glycerol 1-phosphate + H(+). The protein operates within protein modification; lipoprotein biosynthesis (diacylglyceryl transfer). Catalyzes the transfer of the diacylglyceryl group from phosphatidylglycerol to the sulfhydryl group of the N-terminal cysteine of a prolipoprotein, the first step in the formation of mature lipoproteins. The polypeptide is Phosphatidylglycerol--prolipoprotein diacylglyceryl transferase (Clostridium botulinum (strain 657 / Type Ba4)).